We begin with the raw amino-acid sequence, 354 residues long: Alkanal monooxygenase alpha chain (354 aa).

It belongs to the bacterial luciferase oxidoreductase family. Heterodimer of an alpha and a beta chain.

It catalyses the reaction a long-chain fatty aldehyde + FMNH2 + O2 = a long-chain fatty acid + hnu + FMN + H2O + 2 H(+). Light-emitting reaction in luminous bacteria. The polypeptide is Alkanal monooxygenase alpha chain (luxA) (Photobacterium leiognathi).